We begin with the raw amino-acid sequence, 367 residues long: Alginate lyase (367 aa).

The signal sequence occupies residues 1–24 (MTIINRKTAPALLALALFGGAAQA). Substrate is bound by residues 63–64 (SK), 136–137 (HT), and Tyr-254.

This sequence belongs to the polysaccharide lyase 5 family.

The protein resides in the periplasm. It catalyses the reaction Eliminative cleavage of alginate to give oligosaccharides with 4-deoxy-alpha-L-erythro-hex-4-enuronosyl groups at their non-reducing ends and beta-D-mannuronate at their reducing end.. In terms of biological role, catalyzes the depolymerization of alginate by cleaving the beta-1,4 glycosidic bond between two adjacent sugar residues via a beta-elimination mechanism. May serve to degrade mislocalized alginate that is trapped in the periplasmic space. This Pseudomonas entomophila (strain L48) protein is Alginate lyase.